Reading from the N-terminus, the 150-residue chain is Nucleoside diphosphate kinase (150 aa).

Residues Lys-9, Phe-57, Arg-85, Thr-91, Arg-102, and Asn-112 each contribute to the ATP site. His-115 functions as the Pros-phosphohistidine intermediate in the catalytic mechanism.

This sequence belongs to the NDK family. As to quaternary structure, homotetramer. Mg(2+) is required as a cofactor.

Its subcellular location is the cytoplasm. The catalysed reaction is a 2'-deoxyribonucleoside 5'-diphosphate + ATP = a 2'-deoxyribonucleoside 5'-triphosphate + ADP. The enzyme catalyses a ribonucleoside 5'-diphosphate + ATP = a ribonucleoside 5'-triphosphate + ADP. Its function is as follows. Major role in the synthesis of nucleoside triphosphates other than ATP. The ATP gamma phosphate is transferred to the NDP beta phosphate via a ping-pong mechanism, using a phosphorylated active-site intermediate. The polypeptide is Nucleoside diphosphate kinase (Staphylococcus carnosus (strain TM300)).